Reading from the N-terminus, the 396-residue chain is Na(+)/H(+) antiporter NhaA 2 (396 aa).

11 consecutive transmembrane segments (helical) span residues 17–37, 62–82, 98–118, 125–145, 154–174, 179–199, 209–229, 268–288, 296–316, 337–357, and 368–388; these read LSGL…NSDF, LLHW…GLEI, SFPI…YISL, GFGV…MLLG, LFLV…VAIF, LHFE…FLNY, IILG…STIA, FSAF…IIDF, LIVL…IFSF, IFAV…ISHL, and VKLG…VLLI.

The protein belongs to the NhaA Na(+)/H(+) (TC 2.A.33) antiporter family.

It localises to the cell inner membrane. It catalyses the reaction Na(+)(in) + 2 H(+)(out) = Na(+)(out) + 2 H(+)(in). Functionally, na(+)/H(+) antiporter that extrudes sodium in exchange for external protons. This chain is Na(+)/H(+) antiporter NhaA 2, found in Aliarcobacter butzleri (strain RM4018) (Arcobacter butzleri).